A 352-amino-acid polypeptide reads, in one-letter code: tRNA-specific 2-thiouridylase MnmA (352 aa).

Residues 7–14 and Leu-33 each bind ATP; that span reads GLSGGVDS. Cys-94 functions as the Nucleophile in the catalytic mechanism. A disulfide bond links Cys-94 and Cys-193. Position 119 (Gly-119) interacts with ATP. The interaction with tRNA stretch occupies residues 143-145; the sequence is KDQ. Cys-193 functions as the Cysteine persulfide intermediate in the catalytic mechanism. The interval 298 to 299 is interaction with tRNA; that stretch reads RY.

Belongs to the MnmA/TRMU family.

The protein resides in the cytoplasm. The catalysed reaction is S-sulfanyl-L-cysteinyl-[protein] + uridine(34) in tRNA + AH2 + ATP = 2-thiouridine(34) in tRNA + L-cysteinyl-[protein] + A + AMP + diphosphate + H(+). Catalyzes the 2-thiolation of uridine at the wobble position (U34) of tRNA, leading to the formation of s(2)U34. In Nostoc sp. (strain PCC 7120 / SAG 25.82 / UTEX 2576), this protein is tRNA-specific 2-thiouridylase MnmA.